Consider the following 283-residue polypeptide: Putative cuticle collagen 79 (283 aa).

Positions 59 to 283 (FKQQSSPPSP…ARSISKVAIQ (225 aa)) are disordered. Triple-helical region stretches follow at residues 94-122 (GPPG…ENGG), 139-201 (GPRG…PGRK), and 204-269 (GEAG…DGAY). The span at 137 to 146 (PPGPRGPPGP) shows a compositional bias: pro residues. Positions 226–240 (TDGDDGVDGQPGDEG) are enriched in acidic residues. Residues 253-265 (PQGEQGTEGQPGT) are compositionally biased toward low complexity.

This sequence belongs to the cuticular collagen family. Collagen polypeptide chains are complexed within the cuticle by disulfide bonds and other types of covalent cross-links.

Nematode cuticles are composed largely of collagen-like proteins. The cuticle functions both as an exoskeleton and as a barrier to protect the worm from its environment. This Caenorhabditis elegans protein is Putative cuticle collagen 79 (col-79).